The chain runs to 425 residues: Histidine--tRNA ligase (425 aa).

This sequence belongs to the class-II aminoacyl-tRNA synthetase family. Homodimer.

It is found in the cytoplasm. It catalyses the reaction tRNA(His) + L-histidine + ATP = L-histidyl-tRNA(His) + AMP + diphosphate + H(+). The chain is Histidine--tRNA ligase from Desulforapulum autotrophicum (strain ATCC 43914 / DSM 3382 / VKM B-1955 / HRM2) (Desulfobacterium autotrophicum).